The following is a 592-amino-acid chain: LIM domain-binding protein 1 (592 aa).

Disordered stretches follow at residues 14-41 and 305-368; these read GHPP…NSQN and PAPE…NPMT. A compositionally biased stretch (polar residues) spans 23 to 41; sequence ESSNSHYGMPPSQGTNSQN. The span at 322–344 shows a compositional bias: low complexity; that stretch reads PAANPRGSKKATAAAAAAAAAAT. Polar residues predominate over residues 352 to 368; it reads PTASPANNQQFPPNPMT. An LIM interaction domain (LID) domain is found at 378-417; sequence DVMVVGEPSMMGSEFGENDERTISRVENSQYDPNAMQMQS. 2 disordered regions span residues 437 to 458 and 559 to 592; these read HHPG…MGSQ and GGMQ…MITG. Over residues 577–586 the composition is skewed to pro residues; that stretch reads GPPPQWPPPN.

It belongs to the LDB family. As to quaternary structure, interacts with blmp-1. In terms of tissue distribution, expressed in all neurons and some other tissues of the adult, including vulval muscle, and, in males, all the neurons of the tail region. Expressed in vulval cells.

Its function is as follows. Binds to the LIM domain of LIM domain-containing transcription factors. Required for the blmp-1-mediated transcriptional activation or repression of several hypodermal genes, such as bed-3. Regulates sam-10 nuclear localization in PLM neurons. Has a role in synaptic differentiation of PLM mechanosensory neurons. Involved in gonadogenesis. This is LIM domain-binding protein 1 from Caenorhabditis elegans.